A 213-amino-acid chain; its full sequence is uncharacterized protein (213 aa).

Polar residues predominate over residues 1-14; it reads MSSDVLVTTPAQRQ. The interval 1–26 is disordered; it reads MSSDVLVTTPAQRQTEPHAEAVSRNR. An HTH tetR-type domain is found at 29-89; that stretch reads QATFRKVLAA…EVYLDLVRQV (61 aa).

This is an uncharacterized protein from Mycobacterium tuberculosis (strain CDC 1551 / Oshkosh).